A 600-amino-acid chain; its full sequence is NADH-quinone oxidoreductase subunit C/D (600 aa).

Residues 1 to 190 (MVNNMTDLTA…SPFELTKAKQ (190 aa)) form an NADH dehydrogenase I subunit C region. Residues 214–600 (DFMFLNLGPN…IDFVMSDVDR (387 aa)) are NADH dehydrogenase I subunit D.

In the N-terminal section; belongs to the complex I 30 kDa subunit family. This sequence in the C-terminal section; belongs to the complex I 49 kDa subunit family. In terms of assembly, NDH-1 is composed of 13 different subunits. Subunits NuoB, CD, E, F, and G constitute the peripheral sector of the complex.

It is found in the cell inner membrane. The enzyme catalyses a quinone + NADH + 5 H(+)(in) = a quinol + NAD(+) + 4 H(+)(out). In terms of biological role, NDH-1 shuttles electrons from NADH, via FMN and iron-sulfur (Fe-S) centers, to quinones in the respiratory chain. The immediate electron acceptor for the enzyme in this species is believed to be ubiquinone. Couples the redox reaction to proton translocation (for every two electrons transferred, four hydrogen ions are translocated across the cytoplasmic membrane), and thus conserves the redox energy in a proton gradient. The sequence is that of NADH-quinone oxidoreductase subunit C/D from Escherichia coli O157:H7.